We begin with the raw amino-acid sequence, 310 residues long: Cytochrome f (310 aa).

The signal sequence occupies residues 1–27 (MRRLLSPLFAALIVGVTVLTAPSTSWA). The heme site is built by tyrosine 28, cysteine 48, cysteine 51, and histidine 52. A helical transmembrane segment spans residues 277–297 (IYGLLAFFAAVALAQIMLVLK).

Belongs to the cytochrome f family. The 4 large subunits of the cytochrome b6-f complex are cytochrome b6, subunit IV (17 kDa polypeptide, PetD), cytochrome f and the Rieske protein, while the 4 small subunits are PetG, PetL, PetM and PetN. The complex functions as a dimer. Heme is required as a cofactor.

The protein localises to the cellular thylakoid membrane. Its function is as follows. Component of the cytochrome b6-f complex, which mediates electron transfer between photosystem II (PSII) and photosystem I (PSI), cyclic electron flow around PSI, and state transitions. The chain is Cytochrome f from Synechococcus sp. (strain WH7803).